The primary structure comprises 599 residues: Endoribonuclease ZC3H12A (599 aa).

The tract at residues Met-1–Ala-40 is disordered. Positions Glu-42–Lys-87 are ubiquitin association domain. Residues Val-81–Gly-150 are necessary for interaction with TANK. A disordered region spans residues Thr-90–Ser-133. At Ser-99 the chain carries Phosphoserine. The RNase stretch occupies residues Gly-112 to Leu-297. In terms of domain architecture, RNase NYN spans Leu-135–Asn-290. The segment at Arg-214–Arg-220 is RNA binding. Residue Asp-226 coordinates Mg(2+). The C3H1-type zinc-finger motif lies at His-301 to Glu-324. The interval His-301–Gly-457 is necessary for interaction with ZC3H12D. The interval Leu-343–Trp-420 is disordered. At Ser-344 the chain carries Phosphoserine. Positions Pro-358–Ser-375 are enriched in low complexity. Positions Ser-386–Ala-399 are enriched in polar residues. Ser-438 and Ser-442 each carry phosphoserine. The interval Pro-522 to Ala-546 is disordered.

It belongs to the ZC3H12 family. Oligomer. Found in a deubiquitination complex with TANK, USP10 and ZC3H12A; this complex inhibits genotoxic stress- or interleukin-1-beta-mediated NF-kappaB activation by promoting IKBKG or TRAF6 deubiquitination. Interacts with IKBKG; this interaction increases in response to DNA damage. Interacts with TANK; this interaction increases in response to DNA damage and serves as a bridge to anchor both TANK and USP10 into a deubiquitinating complex. Interacts with TRAF6; this interaction increases in response to DNA damage and is stimulated by TANK. Interacts with USP10; this interaction increases in response to DNA damage and serves as a bridge to anchor both TANK and USP10 into a deubiquitinating complex. Interacts with ZC3H12D. Interacts with TNRC6A. Interacts with IKBKB/IKKB. Interacts with IKBKB/IKKB. Interacts with BTRC; the interaction occurs when ZC3H12A is phosphorylated in a IKBKB/IKKB-dependent manner. Interacts with IRAK1; this interaction increases the interaction between ZC3H12A and IKBKB/IKKB. Interacts with UPF1; this interaction occurs in a mRNA translationally active- and termination-dependent manner and is essential for ZC3H12A-mediated degradation of target mRNAs. Associates with ribosomes. Interacts with ubiquitin. As to quaternary structure, (Microbial infection) Oligomerization is necessary for antiviral activity. Requires Mg(2+) as cofactor. Post-translationally, phosphorylated by IRAK1; phosphorylation is necessary for subsequent phosphorylation by the I-kappa-B-kinase (IKK) complex. Phosphorylated by I-kappa-B-kinase (IKK) subunits IKBKB/IKKB and CHUK/IKKA at Ser-438 and Ser-442; these phosphorylations promote ubiquitin proteasome-mediated degradation of ZC3H12A and hence facilitates rapid and robust production of IL-6 mRNA in response to toll-like receptor (TLR) or IL-1 receptor stimuli. In terms of processing, (Microbial infection) Rapidly degraded in activated T-cells in response to phorbol 13-acetate 12-myristate (PMA) during HIV-1 viral infection. Ubiquitinated; ubiquitination is induced in response to interleukin IL1 receptor stimuli in a IKBKB/IKKB and IRAK1-dependent manner, leading to proteasome-mediated degradation. Post-translationally, proteolytically cleaved between Arg-111 and Arg-214 by MALT1 in activated T-cells; cleavage at Arg-111 is critical for promoting ZC3H12A degradation in response to T-cell receptor (TCR) stimulation, and hence is necessary for prolonging the stability of a set of mRNAs controlling T-cell activation and Th17 cell differentiation. As to expression, expressed in heart, placenta, spleen, kidney, liver and lung. Expressed in leukocytes. Expressed in monocyte.

It localises to the nucleus. The protein localises to the cytoplasm. The protein resides in the P-body. It is found in the rough endoplasmic reticulum membrane. Its subcellular location is the cytoplasmic granule. In terms of biological role, endoribonuclease involved in various biological functions such as cellular inflammatory response and immune homeostasis, glial differentiation of neuroprogenitor cells, cell death of cardiomyocytes, adipogenesis and angiogenesis. Functions as an endoribonuclease involved in mRNA decay. Modulates the inflammatory response by promoting the degradation of a set of translationally active cytokine-induced inflammation-related mRNAs, such as IL6 and IL12B, during the early phase of inflammation. Prevents aberrant T-cell-mediated immune reaction by degradation of multiple mRNAs controlling T-cell activation, such as those encoding cytokines (IL6 and IL2), cell surface receptors (ICOS, TNFRSF4 and TNFR2) and transcription factor (REL). Inhibits cooperatively with ZC3H12A the differentiation of helper T cells Th17 in lungs. They repress target mRNA encoding the Th17 cell-promoting factors IL6, ICOS, REL, IRF4, NFKBID and NFKBIZ. The cooperation requires RNA-binding by RC3H1 and the nuclease activity of ZC3H12A. Together with RC3H1, destabilizes TNFRSF4/OX40 mRNA by binding to the conserved stem loop structure in its 3'UTR. Self regulates by destabilizing its own mRNA. Cleaves mRNA harboring a stem-loop (SL), often located in their 3'-UTRs, during the early phase of inflammation in a helicase UPF1-dependent manner. Plays a role in the inhibition of microRNAs (miRNAs) biogenesis. Cleaves the terminal loop of a set of precursor miRNAs (pre-miRNAs) important for the regulation of the inflammatory response leading to their degradation, and thus preventing the biosynthesis of mature miRNAs. Also plays a role in promoting angiogenesis in response to inflammatory cytokines by inhibiting the production of antiangiogenic microRNAs via its anti-dicer RNase activity. Affects the overall ubiquitination of cellular proteins. Positively regulates deubiquitinase activity promoting the cleavage at 'Lys-48'- and 'Lys-63'-linked polyubiquitin chains on TNF receptor-associated factors (TRAFs), preventing JNK and NF-kappa-B signaling pathway activation, and hence negatively regulating macrophage-mediated inflammatory response and immune homeostasis. Also induces deubiquitination of the transcription factor HIF1A, probably leading to its stabilization and nuclear import, thereby positively regulating the expression of proangiogenic HIF1A-targeted genes. Involved in a TANK-dependent negative feedback response to attenuate NF-kappaB activation through the deubiquitination of IKBKG or TRAF6 in response to interleukin-1-beta (IL1B) stimulation or upon DNA damage. Prevents stress granule (SGs) formation and promotes macrophage apoptosis under stress conditions, including arsenite-induced oxidative stress, heat shock and energy deprivation. Plays a role in the regulation of macrophage polarization; promotes IL4-induced polarization of macrophages M1 into anti-inflammatory M2 state. May also act as a transcription factor that regulates the expression of multiple genes involved in inflammatory response, angiogenesis, adipogenesis and apoptosis. Functions as a positive regulator of glial differentiation of neuroprogenitor cells through an amyloid precursor protein (APP)-dependent signaling pathway. Attenuates septic myocardial contractile dysfunction in response to lipopolysaccharide (LPS) by reducing I-kappa-B-kinase (IKK)-mediated NF-kappa-B activation, and hence myocardial pro-inflammatory cytokine production. (Microbial infection) Binds to Japanese encephalitis virus (JEV) and Dengue virus (DEN) RNAs. Its function is as follows. (Microbial infection) Exhibits antiviral activity against HIV-1 in lymphocytes by decreasing the abundance of HIV-1 viral RNA species. The chain is Endoribonuclease ZC3H12A from Homo sapiens (Human).